The chain runs to 655 residues: Cyclomaltodextrin glucanotransferase (655 aa).

The signal sequence occupies residues M1–A30. Residues D55, N60, N61, G79, and D81 each coordinate Ca(2+). Y123–W124 provides a ligand contact to substrate. N164 lines the Ca(2+) pocket. Substrate contacts are provided by residues H165 and N217 to N220. Residue D223 participates in Ca(2+) binding. R251 provides a ligand contact to substrate. D253 acts as the Nucleophile in catalysis. K256 to H257 provides a ligand contact to substrate. H257 contributes to the Ca(2+) binding site. E287 acts as the Proton donor in catalysis. Residues H362, D436, and R440 each coordinate substrate. Residues A554–F655 form the CBM20 domain. Positions T630–F655 are disordered.

This sequence belongs to the glycosyl hydrolase 13 family. Monomer. The cofactor is Ca(2+).

The catalysed reaction is Cyclizes part of a (1-&gt;4)-alpha-D-glucan chain by formation of a (1-&gt;4)-alpha-D-glucosidic bond.. This chain is Cyclomaltodextrin glucanotransferase (cgt), found in Klebsiella oxytoca.